Consider the following 436-residue polypeptide: MLDFNIEGLIPKNMEKRGELVLNEYLKEIEDVFNHRKIPENGIDDEKIKLFLKFLSMMDTDKDPKSVRIGEREARTYSKIHEELSSGFCHGIGRSGNLVDPQPKASGASIMYALTNKILESFFKQLGLNVHAIATPISTGMSISLCLSAARKKYGSNVVIYPYASHKSPIKAVSFVGMNMRLVETVLDGDRVYVPVEDIENAIKKEIELGNRPCVLSTLTFFPPRNSDDIVEIAKICENYDIPHIINGAYAIQNNYYLEKLKKAFKYRVDAVVSSSDKNLLTPIGGGLVYSTDAEFIKEISLSYPGRASATPVVNTLVSLLSMGSKNYLELVKNQKNSKKLLDELLNDLSKKTGGKFLDVESPIASCISVNSDPVEIAAKLYNLRVTGPRGIKKTDHFGNCYLGTYTHDYIVMNAAIGVRTEDIVNSVSKLEKILL.

Positions 1–44 are tetramerization; it reads MLDFNIEGLIPKNMEKRGELVLNEYLKEIEDVFNHRKIPENGID. Pyridoxal 5'-phosphate is bound at residue Arg-72. The tract at residues 93–103 is phosphate loop (P-loop); that stretch reads GRSGNLVDPQP. Substrate contacts are provided by Arg-94, Ser-95, and Gln-102. Lys-278 is modified (N6-(pyridoxal phosphate)lysine). Residue Arg-307 participates in substrate binding.

The protein belongs to the SepSecS family. Homotetramer. It depends on pyridoxal 5'-phosphate as a cofactor.

It carries out the reaction O-phospho-L-seryl-tRNA(Sec) + selenophosphate + H2O = L-selenocysteinyl-tRNA(Sec) + 2 phosphate. It participates in aminoacyl-tRNA biosynthesis; selenocysteinyl-tRNA(Sec) biosynthesis; selenocysteinyl-tRNA(Sec) from L-seryl-tRNA(Sec) (archaeal/eukaryal route): step 2/2. Functionally, converts O-phosphoseryl-tRNA(Sec) to selenocysteinyl-tRNA(Sec) required for selenoprotein biosynthesis. The protein is O-phosphoseryl-tRNA(Sec) selenium transferase (spcS) of Methanococcus maripaludis (strain DSM 14266 / JCM 13030 / NBRC 101832 / S2 / LL).